The chain runs to 496 residues: Transmembrane protein 104 (496 aa).

Topologically, residues 1 to 10 are cytoplasmic; that stretch reads MAGEITETGE. A helical transmembrane segment spans residues 11–31; sequence LYSSYVGLVYMFNLIVGTGAL. At 32-36 the chain is on the extracellular side; that stretch reads TMPKA. A helical membrane pass occupies residues 37–57; it reads FATAGWLVSLVLLVFLGFMSF. At 58 to 146 the chain is on the cytoplasmic side; that stretch reads VTTTFVIEAM…SMFFNKVGVN (89 aa). A helical transmembrane segment spans residues 147–167; sequence LFYFCIIVYLYGDLAIYAAAV. Topologically, residues 168 to 204 are extracellular; sequence PFSLMQVTCSATGNDSCGVEADTKYNDTDRCWGPLRR. N-linked (GlcNAc...) asparagine glycosylation is present at Asn-193. The chain crosses the membrane as a helical span at residues 205–225; sequence VDAYRIYLAIFTLLLGPFTFF. At 226–233 the chain is on the cytoplasmic side; the sequence is DVQKTKYL. The chain crosses the membrane as a helical span at residues 234 to 254; sequence QILTSLMRWIAFAVMIVLALI. The Extracellular segment spans residues 255-276; that stretch reads RIGHGQGEGHPPLADFSGVRNL. Residues 277 to 297 traverse the membrane as a helical segment; the sequence is FGVCVYSFMCQHSLPSLITPV. Residues 298–306 lie on the Cytoplasmic side of the membrane; that stretch reads SSKRHLTRL. Residues 307 to 327 form a helical membrane-spanning segment; sequence VFLDYVLILAFYGLLSFTAIF. Residues 328–354 are Extracellular-facing; that stretch reads CFRGDSLMDMYTLNFARCDVVGLAAVR. A helical membrane pass occupies residues 355-375; the sequence is FFLGLFPVFTISTNFPIIAVT. Residues 376–397 lie on the Cytoplasmic side of the membrane; the sequence is LRNNWKTLFHREGGTYPWVVDR. The chain crosses the membrane as a helical span at residues 398-418; sequence VVFPTITLVPPVLVAFCTHDL. Residues 419 to 421 are Extracellular-facing; sequence ESL. Residues 422-442 traverse the membrane as a helical segment; it reads VGITGAYAGTGIQYVIPAFLV. Residues 443-470 are Cytoplasmic-facing; it reads YHCRRDTQLAFGCGVSNKHRSPFRHTFW. The helical transmembrane segment at 471–491 threads the bilayer; the sequence is VGFVLLWAFSCFIFVTANIIL. Topologically, residues 492 to 496 are extracellular; sequence SETKL.

This sequence belongs to the TMEM104 family.

The protein localises to the membrane. This Homo sapiens (Human) protein is Transmembrane protein 104 (TMEM104).